Consider the following 25-residue polypeptide: Chlorocatechol 1,2-dioxygenase 1 (25 aa).

It belongs to the intradiol ring-cleavage dioxygenase family. It depends on Fe(3+) as a cofactor.

The enzyme catalyses 3,5-dichlorocatechol + O2 = (2E,4E)-2,4-dichloromuconate + 2 H(+). Its pathway is xenobiotic degradation; 2-(2,4-dichlorophenoxy)propanoate degradation. In Delftia acidovorans (Pseudomonas acidovorans), this protein is Chlorocatechol 1,2-dioxygenase 1 (tfdC).